Reading from the N-terminus, the 287-residue chain is Co-chaperone protein DjlA (287 aa).

The Periplasmic portion of the chain corresponds to 1-6 (MNFIGK). The helical transmembrane segment at 7–30 (FLGLIIGWKLGGFFGAICGVILGH) threads the bilayer. The Cytoplasmic portion of the chain corresponds to 31–287 (LGDKKLYELG…DLICKTKGWK (257 aa)). The J domain maps to 221-287 (DAYKVLGVSA…DLICKTKGWK (67 aa)).

Homodimer.

Its subcellular location is the cell inner membrane. Functionally, regulatory DnaK co-chaperone. Direct interaction between DnaK and DjlA is needed for the induction of the wcaABCDE operon, involved in the synthesis of a colanic acid polysaccharide capsule, possibly through activation of the RcsB/RcsC phosphotransfer signaling pathway. The colanic acid capsule may help the bacterium survive conditions outside the host. The chain is Co-chaperone protein DjlA from Pasteurella multocida (strain Pm70).